Here is an 86-residue protein sequence, read N- to C-terminus: UPF0297 protein CA_C1679 (86 aa).

It belongs to the UPF0297 family.

This is UPF0297 protein CA_C1679 from Clostridium acetobutylicum (strain ATCC 824 / DSM 792 / JCM 1419 / IAM 19013 / LMG 5710 / NBRC 13948 / NRRL B-527 / VKM B-1787 / 2291 / W).